A 231-amino-acid chain; its full sequence is UPF0758 protein aq_1610 (231 aa).

Positions 110–231 (SIRNPQEAFE…YFSFREEGVL (122 aa)) constitute an MPN domain. 3 residues coordinate Zn(2+): histidine 180, histidine 182, and aspartate 193. The short motif at 180–193 (HNHPQGEPSPSNED) is the JAMM motif element.

It belongs to the UPF0758 family.

This is UPF0758 protein aq_1610 from Aquifex aeolicus (strain VF5).